The chain runs to 663 residues: (R)-specific secondary-alkylsulfatase (663 aa).

Positions 1–28 are cleaved as a signal peptide; that stretch reads MSRFIRASQRRTLLATLIAATLAQPLLA. The Zn(2+) site is built by His-179, His-181, Asp-183, and His-184. Gln-232 provides a ligand contact to sulfate. The Zn(2+) site is built by Glu-291 and Asp-310. Residues 318-323 and Arg-328 each bind sulfate; that span reads NLLTPR. Zn(2+) is bound at residue His-355. Tyr-417 serves as a coordination point for sulfate.

This sequence belongs to the metallo-beta-lactamase superfamily. Type III sulfatase family. As to quaternary structure, homodimer.

It carries out the reaction an (R)-secondary-alkyl sulfate + H2O = an (S)-secondary-alcohol + sulfate.. In terms of biological role, alkylsulfatase that catalyzes the enantioselective hydrolysis of secondary-alkylsulfates with strict inversion of configuration, leading to the formation of homochiral (S)-configurated alcohols and nonreacted sulfate esters. The substrate spectrum includes a range of linear, branched or cyclic sec-alkylsulfates. Can use sec-alkylsulfate esters bearing aromatic, olefinic and acetylenic moieties. Acts by cleaving the C-O bond, resulting in inversion at the carbon. The sequence is that of (R)-specific secondary-alkylsulfatase from Pseudomonas sp.